Consider the following 540-residue polypeptide: Chaperonin GroEL 2 (540 aa).

Residues 30–33, K51, 87–91, G415, 479–481, and D495 each bind ATP; these read TLGP, DGTTT, and NAA.

The protein belongs to the chaperonin (HSP60) family. In terms of assembly, forms a cylinder of 14 subunits composed of two heptameric rings stacked back-to-back. Interacts with the co-chaperonin GroES.

The protein resides in the cytoplasm. It carries out the reaction ATP + H2O + a folded polypeptide = ADP + phosphate + an unfolded polypeptide.. Functionally, together with its co-chaperonin GroES, plays an essential role in assisting protein folding. The GroEL-GroES system forms a nano-cage that allows encapsulation of the non-native substrate proteins and provides a physical environment optimized to promote and accelerate protein folding. The protein is Chaperonin GroEL 2 of Burkholderia vietnamiensis (strain G4 / LMG 22486) (Burkholderia cepacia (strain R1808)).